A 211-amino-acid chain; its full sequence is WAP four-disulfide core domain protein 1 (211 aa).

The N-terminal stretch at 1–23 (MGNCGRKVLRALSFLLLLGSSSA) is a signal peptide. The 50-residue stretch at 50–99 (RQPHADRCPPPPRTLPPGACQATRCQADSECPRHRRCCYNGCAYACLEAV) folds into the WAP domain. Disulfide bonds link Cys-57–Cys-87, Cys-69–Cys-91, Cys-74–Cys-86, and Cys-80–Cys-95. A compositionally biased stretch (basic and acidic residues) spans 182 to 198 (VLRQRLHKEYPEGDSKN). A disordered region spans residues 182-211 (VLRQRLHKEYPEGDSKNVAEPGKGQQRHFP).

It localises to the secreted. In terms of biological role, has growth inhibitory activity. In Mus musculus (Mouse), this protein is WAP four-disulfide core domain protein 1 (Wfdc1).